The sequence spans 72 residues: Cytochrome b-c1 complex subunit 8-1, mitochondrial (72 aa).

The Mitochondrial matrix segment spans residues 1 to 41 (MGKQPVKLKAVVYALSPFQQKIMTGLWKDLPEKIHHKVSEN). Residues 42 to 58 (WISATLLVTPVVGTYWY) traverse the membrane as a helical segment. At 59–72 (AQYFKEQEKLEHRF) the chain is on the mitochondrial intermembrane side.

Belongs to the UQCRQ/QCR8 family. Component of the ubiquinol-cytochrome c oxidoreductase (cytochrome b-c1 complex, complex III, CIII), a multisubunit enzyme composed of 10 subunits. The complex is composed of 3 respiratory subunits cytochrome b (MT-CYB), cytochrome c1 (CYC1-1 or CYC1-2) and Rieske protein (UCR1-1 or UCR1-2), 2 core protein subunits MPPalpha1 (or MPPalpha2) and MPPB, and 5 low-molecular weight protein subunits QCR7-1 (or QCR7-2), UCRQ-1 (or UCRQ-2), QCR9, UCRY and probably QCR6-1 (or QCR6-2). The complex exists as an obligatory dimer and forms supercomplexes (SCs) in the inner mitochondrial membrane with NADH-ubiquinone oxidoreductase (complex I, CI), resulting in different assemblies (supercomplexes SCI(1)III(2) and SCI(2)III(4)).

The protein resides in the mitochondrion inner membrane. In terms of biological role, component of the ubiquinol-cytochrome c oxidoreductase, a multisubunit transmembrane complex that is part of the mitochondrial electron transport chain which drives oxidative phosphorylation. The respiratory chain contains 3 multisubunit complexes succinate dehydrogenase (complex II, CII), ubiquinol-cytochrome c oxidoreductase (cytochrome b-c1 complex, complex III, CIII) and cytochrome c oxidase (complex IV, CIV), that cooperate to transfer electrons derived from NADH and succinate to molecular oxygen, creating an electrochemical gradient over the inner membrane that drives transmembrane transport and the ATP synthase. The cytochrome b-c1 complex catalyzes electron transfer from ubiquinol to cytochrome c, linking this redox reaction to translocation of protons across the mitochondrial inner membrane, with protons being carried across the membrane as hydrogens on the quinol. In the process called Q cycle, 2 protons are consumed from the matrix, 4 protons are released into the intermembrane space and 2 electrons are passed to cytochrome c. In Arabidopsis thaliana (Mouse-ear cress), this protein is Cytochrome b-c1 complex subunit 8-1, mitochondrial (UCRQ-1).